The sequence spans 1275 residues: MDWDDEYSHNSFDLHCLLNSFPGDLEFEQIFSDIDEKIEQNAASIKHCIKEIQSEINKQCPGVQLQTTTDCFEWLTNYNYSTSESSFISHGDLIKFFKTLQDLLKNEQNQEEMTLDLLWDLSCHSSVSFPSTLSGTSFHFLSRTSLHSVEDNSSMDVKSMWDDIRLHLRRFLVSKLQSHNEINNSQQKILLKKQCLQQLLFLYPESEVIIKYQNIQNKLLANLLWNCFPSYNRDSNLDVIAHGYQSTMLKLYSVIKEDFNTLCEILAPSSMVKFIKETYLDTVTEEMAKFLENFCELQFRENAVRVVKTSKSSSKHRGAVHALVTTECPQKGRNFSLPLDKVEFLSQLIKSFMKLEKGVQELFDEILLSLKITRDTSGILEKSDREVVMEKPRANETNIPSEQSLPGKEATLLDFGWRSAFKEVSLPMAHCVVTAIEGFSTKILQQEQNERSSAVSYAMNLVNVQQVWQDSHMFPEEEQPKKIGKFCSDIMEKLDTMLPLALACRDDSFQEIRANLVEACCKVATAVLQRLQERAKEVPSKAPLKNLHTYLSTAVYVFQHFKRYDNLMKEMTKKPIFLVLVQRYQEFINTLQFQVTNYCVRVCATSILQDAESHHWDDYKAFYEGERCSFSIQMWHYFCWSLHYDLWTILPPKLAQEILVEVLEKSLSLLASRYARAHPSRKRTPQLRLDVTTILICTENMLWSVCTSVQKLLNPHQHTDDKIFKIHTHCNNLFTTLVILTSPLTELYKTFQHGLDESASDSLKSFFKQPLYWVSCISHFYPSLLRTPSAGGLKAEGQLKLLLSQPRCNWNLLLETLLHHDGLLLRILLKSSKQVSDTENNLNQGPSLMEAIFKILYHCSFSPQTFANVFVSYMEEEQLWDFLYNIPVSTCVEYELEVIRCLRLALTDAIKDTVQQIVSVMSSRRNCETNLNKHIVPDCLLESMPKEWNYSPKETNRKESCKSFTRLTAQAVSIVISKLPTVIACLPPPVKYFFFLSERKMSKKFVELKKAGLLVWNLIVIICRIFEDGNTVELLTGASLDRWSKEKLGLICMCLKSIMGDQTSIHNQMIQKVIQSIEQQKPNWIERQLLKARKLSTECAFMTIEKSTALQEGDVALELTEQKINTMVLDLCHKPGGREYLRQIYHIMQLNEEYLKEQLFSMNSSEEKPLPIRPLKTTLRSIEDQPSAFNPFHVYKAFSENMLDQSAITKWNWNWAKLLPNYLRLDKMTFSVLLKNRWEMKKDETLEEEEKAILEHLKQICTPQNSSASDNIEEQ.

This is an uncharacterized protein from Homo sapiens (Human).